A 185-amino-acid chain; its full sequence is 3-hexulose-6-phosphate isomerase (185 aa).

An SIS domain is found at 29-172; it reads LADHILSSHQ…ILKLMEKKGL (144 aa). Residues S47 and 86–91 contribute to the substrate site; that span reads SGSGET. The active-site Proton acceptor is the E152.

Belongs to the SIS family. PHI subfamily. In terms of assembly, homotetramer.

It catalyses the reaction D-arabino-hex-3-ulose 6-phosphate = beta-D-fructose 6-phosphate. Its pathway is one-carbon metabolism; formaldehyde assimilation via RuMP pathway; D-fructose 6-phosphate from D-ribulose 5-phosphate and formaldehyde: step 2/2. In terms of biological role, catalyzes the isomerization between 3-hexulose 6-phosphate and fructose 6-phosphate. Together with HxlA, may act as a formaldehyde detoxification system. In Bacillus subtilis (strain 168), this protein is 3-hexulose-6-phosphate isomerase (hxlB).